Consider the following 110-residue polypeptide: Protein RnfH (110 aa).

The interval 86 to 110 (RKRAAQQAKDQEEKKKAEKSANKEN) is disordered. The span at 94–110 (KDQEEKKKAEKSANKEN) shows a compositional bias: basic and acidic residues.

The protein belongs to the UPF0125 (RnfH) family.

The chain is Protein RnfH from Mannheimia succiniciproducens (strain KCTC 0769BP / MBEL55E).